A 356-amino-acid polypeptide reads, in one-letter code: S-adenosylmethionine:tRNA ribosyltransferase-isomerase (356 aa).

Belongs to the QueA family. As to quaternary structure, monomer.

The protein resides in the cytoplasm. It carries out the reaction 7-aminomethyl-7-carbaguanosine(34) in tRNA + S-adenosyl-L-methionine = epoxyqueuosine(34) in tRNA + adenine + L-methionine + 2 H(+). Its pathway is tRNA modification; tRNA-queuosine biosynthesis. Its function is as follows. Transfers and isomerizes the ribose moiety from AdoMet to the 7-aminomethyl group of 7-deazaguanine (preQ1-tRNA) to give epoxyqueuosine (oQ-tRNA). The chain is S-adenosylmethionine:tRNA ribosyltransferase-isomerase from Xanthomonas campestris pv. campestris (strain B100).